We begin with the raw amino-acid sequence, 131 residues long: D-ribose pyranase (131 aa).

The active-site Proton donor is H20. Substrate-binding positions include D28, H98, and 120 to 122 (YAN).

It belongs to the RbsD / FucU family. RbsD subfamily. Homodecamer.

It is found in the cytoplasm. The catalysed reaction is beta-D-ribopyranose = beta-D-ribofuranose. It participates in carbohydrate metabolism; D-ribose degradation; D-ribose 5-phosphate from beta-D-ribopyranose: step 1/2. Catalyzes the interconversion of beta-pyran and beta-furan forms of D-ribose. The sequence is that of D-ribose pyranase from Bacillus cereus (strain ZK / E33L).